Here is a 220-residue protein sequence, read N- to C-terminus: uncharacterized protein (220 aa).

This is an uncharacterized protein from Borreliella burgdorferi (strain ATCC 35210 / DSM 4680 / CIP 102532 / B31) (Borrelia burgdorferi).